Reading from the N-terminus, the 130-residue chain is Small ribosomal subunit protein uS8 (130 aa).

It belongs to the universal ribosomal protein uS8 family. As to quaternary structure, part of the 30S ribosomal subunit. Contacts proteins S5 and S12.

Its function is as follows. One of the primary rRNA binding proteins, it binds directly to 16S rRNA central domain where it helps coordinate assembly of the platform of the 30S subunit. The protein is Small ribosomal subunit protein uS8 of Haemophilus ducreyi (strain 35000HP / ATCC 700724).